The sequence spans 221 residues: Max dimerization protein 1 (221 aa).

Residues 21-49 (RREREAEHGYASMLPYNNKDRDALKRRNK) carry the Nuclear localization signal motif. Disordered regions lie at residues 30–68 (YASM…EKNR) and 173–204 (TGDL…YSST). The region spanning 56 to 108 (SSRSTHNEMEKNRRAHLRLCLEKLKGLVPLGPESSRHTTLSLLTKAKLHIKKL) is the bHLH domain. A compositionally biased stretch (low complexity) spans 175-184 (DLDWSSSSVS). Positions 191-204 (SMQSLGSDEGYSST) are enriched in polar residues.

In terms of assembly, heterodimer with MAX; the interaction is required for DNA-binding. DNA binding requires dimerization with another bHLH protein; does not form homodimers, and does not bind to DNA in the absence of MAX in vitro. Interacts with RNF17. Post-translationally, ubiquitinated by BIRC2/c-IAP1, leading to its subsequent degradation by the proteasome.

The protein localises to the nucleus. In terms of biological role, component of a transcriptional repressor complex together with MAX. In complex with MAX binds to the core DNA sequence 5'-CAC[GA]TG-3'. Antagonizes MYC transcriptional activity by competing with MYC for MAX binding. Binds to the TERT promoter and represses telomerase expression, possibly by interfering with MYC binding. This is Max dimerization protein 1 (MXD1) from Homo sapiens (Human).